Reading from the N-terminus, the 2702-residue chain is Serine/threonine-protein kinase ATR (2702 aa).

Residues 1646-2255 (TLARASFRCQ…LWIMAAVSKS (610 aa)) enclose the FAT domain. A PI3K/PI4K catalytic domain is found at 2366–2678 (IADEAEILSS…GVPLPVEGQA (313 aa)). Positions 2372 to 2378 (ILSSLQR) are G-loop. The interval 2543–2551 (GLGDRHGEN) is catalytic loop. The activation loop stretch occupies residues 2563 to 2587 (HVDFSCLFDKGLQLEKPELVPFRLT). In terms of domain architecture, FATC spans 2670–2702 (VPLPVEGQARRLIADAVSLENLGKMYIWWMPWF).

The protein belongs to the PI3/PI4-kinase family. ATM subfamily.

It is found in the nucleus. The catalysed reaction is L-seryl-[protein] + ATP = O-phospho-L-seryl-[protein] + ADP + H(+). The enzyme catalyses L-threonyl-[protein] + ATP = O-phospho-L-threonyl-[protein] + ADP + H(+). Probable serine/threonine kinase. Plays a central role in cell-cycle regulation by transmitting DNA damage signals to downstream effectors of cell-cycle progression. May recognize the substrate consensus sequence [ST]-Q and phosphorylate histone variant H2AX to form H2AXS139ph at sites of DNA damage, thereby regulating DNA damage response mechanism. Seems to be required for the G2-phase checkpoint in response to replication blocks but not absolutely required in the G2-arrest response to double-strand breaks. May also be involved in the meiosis process. Required for the basal expression of RNR1 (ribonucleotide reductase large subunit). Acts in concert with telomerase to maintain telomeric DNA tracts. Not required for telomere length homeostasis. Required for effective immune responses that involve activation of DNA damage responses. The polypeptide is Serine/threonine-protein kinase ATR (ATR) (Arabidopsis thaliana (Mouse-ear cress)).